A 905-amino-acid polypeptide reads, in one-letter code: MLNRSKKRNGCYFWVNGSSDEIRYVAVKASPKVNWKTHIIWRSLKNVKCIDSFHGNNEILGAGSSTGNISLLSVKHPEFQAVVTPGYARPCNSLAFSETEHLVAGFAKSRNESSLKLWDLNSLLSDPKSSPLMQSSTLDGVSSVCYKKDTPLLLTGSTSRSVHIIDTRQQLDSVSSVNTQYYSNIVVDPFSPNYFAANSYDGDIAIFDTRYFKSDNYLQIILRNENKKPKNPQLFALKYSEWKPGQLAVLSNNSITLRQLLPCVNGNEGSANNSVFVNYEKKYPVKPNSQCSGIDFFTPSTAFPTHVQILGVINEQPKLFSVHDEVIPFSFNPYNDLIFSFKEKLYPLNSSPFNTLSDVPQFDVSEFVDENSFDSSSSCSSKVFLTTRNNSINSEDSAHEVLLSYNRVLGSDIQGTILDRVKKGYQFDSQKNSELVSDLYLKDLWSWIHLSHRQSEESLFGDTGDTDFSYQGALGIWFMDTELTSMSDVFEAKESKFLEKKILRLARDVIERLDLDIFTSIQTKRPLRQLALLACGLGMSNDDLLLEIRRLIRKNEHVKAAGLALFHGKIENVVRILSSGNELEKTISTAVAGYITSQGLSNFGSDSLWKEMSRNLSTELEDPYLRAIFAYVSNSDWRDVLDEVSLSLKDRLGIALRFLPDDDLSNYLCDLCHTTVQSGDPEGLLLTGLTPLGMELLQNYIDHTSDVQTAALIAAFVVPKKFLDKRAEDWTESYRELLNRWKLYRERAKFDIFRTELSKNHTGEITRKATEPSIRIICNFCRKPIFPFSNRNECNNLPTPIQRGVSKAGPAKHLGKSCPHCGQPLPKCSVCGFSLGDEDVPQKDDFSQKPQNYVKEVNLQKSRFGLWFSFCLNCGHGAHASHASEWFSTHTICPVPNCDCECKLK.

WD repeat units follow at residues 42 to 82 (RSLK…FQAV), 86 to 128 (GYAR…SDPK), 136 to 175 (STLD…DSVS), and 177 to 217 (VNTQ…SDNY). 2 positions are modified to phosphoserine: serine 394 and serine 397.

Belongs to the WD repeat mio family.

This is an uncharacterized protein from Schizosaccharomyces pombe (strain 972 / ATCC 24843) (Fission yeast).